The chain runs to 480 residues: 2-phosphoxylose phosphatase 1 (480 aa).

Residues 1-6 (MLFRNR) lie on the Cytoplasmic side of the membrane. A helical; Signal-anchor for type II membrane protein transmembrane segment spans residues 7-27 (FLLLLALAALLAFVSLSLQFF). At 28-480 (HLIPVSTPKN…YYDACHREGF (453 aa)) the chain is on the lumenal side. Catalysis depends on His-97, which acts as the Nucleophile. 2 N-linked (GlcNAc...) asparagine glycosylation sites follow: Asn-305 and Asn-354. The active-site Proton donor is Asp-379.

Belongs to the histidine acid phosphatase family. In terms of assembly, interacts with B3GAT3; the interaction increases the 2-phosphoxylose phosphatase activity of PXYLP1 during completion of linkage region formation in a B3GAT3-mediated manner. Widely expressed. Strongly expressed in spleen, fetal liver, moderately in placenta, pancreas, kidney, thymus and colon.

Its subcellular location is the golgi apparatus membrane. It carries out the reaction 3-O-[beta-D-GlcA-(1-&gt;3)-beta-D-Gal-(1-&gt;3)-beta-D-Gal-(1-&gt;4)-beta-D-2-O-P-Xyl]-L-seryl-[protein] + H2O = 3-O-(beta-D-GlcA-(1-&gt;3)-beta-D-Gal-(1-&gt;3)-beta-D-Gal-(1-&gt;4)-beta-D-Xyl)-L-seryl-[protein] + phosphate. Responsible for the 2-O-dephosphorylation of xylose in the glycosaminoglycan-protein linkage region of proteoglycans thereby regulating the amount of mature glycosaminoglycan (GAG) chains. Sulfated glycosaminoglycans (GAGs), including heparan sulfate and chondroitin sulfate, are synthesized on the so-called common GAG-protein linkage region (GlcUAbeta1-3Galbeta1-3Galbeta1-4Xylbeta1-O-Ser) of core proteins, which is formed by the stepwise addition of monosaccharide residues by the respective specific glycosyltransferases. Xylose 2-O-dephosphorylation during completion of linkage region formation is a prerequisite for the initiation and efficient elongation of the repeating disaccharide region of GAG chains. This chain is 2-phosphoxylose phosphatase 1, found in Homo sapiens (Human).